The chain runs to 418 residues: UDP-N-acetylglucosamine 1-carboxyvinyltransferase (418 aa).

Lysine 22–asparagine 23 is a binding site for phosphoenolpyruvate. Residue arginine 92 coordinates UDP-N-acetyl-alpha-D-glucosamine. Catalysis depends on cysteine 116, which acts as the Proton donor. At cysteine 116 the chain carries 2-(S-cysteinyl)pyruvic acid O-phosphothioketal. UDP-N-acetyl-alpha-D-glucosamine-binding residues include aspartate 306 and isoleucine 328.

It belongs to the EPSP synthase family. MurA subfamily.

The protein localises to the cytoplasm. The enzyme catalyses phosphoenolpyruvate + UDP-N-acetyl-alpha-D-glucosamine = UDP-N-acetyl-3-O-(1-carboxyvinyl)-alpha-D-glucosamine + phosphate. Its pathway is cell wall biogenesis; peptidoglycan biosynthesis. In terms of biological role, cell wall formation. Adds enolpyruvyl to UDP-N-acetylglucosamine. The protein is UDP-N-acetylglucosamine 1-carboxyvinyltransferase of Shewanella amazonensis (strain ATCC BAA-1098 / SB2B).